The chain runs to 269 residues: Gene 51 glycoprotein (269 aa).

N-linked (GlcNAc...) asparagine; by host glycans are attached at residues Asn-53, Asn-58, Asn-74, and Asn-78. Disordered regions lie at residues 67-87 (LSTS…TTPY) and 103-137 (MLNS…ASKN). Low complexity predominate over residues 76–87 (TSNTSYSQTTPY). Polar residues predominate over residues 103–112 (MLNSTPNKPL). Over residues 113–136 (SSTKLTPKSQSSSQSTKTTKQASK) the composition is skewed to low complexity. Asn-137, Asn-161, Asn-170, and Asn-191 each carry an N-linked (GlcNAc...) asparagine; by host glycan.

The chain is Gene 51 glycoprotein (51) from Saimiriine herpesvirus 2 (strain 11) (SaHV-2).